Consider the following 174-residue polypeptide: Eukaryotic translation elongation factor 1 epsilon-1 (174 aa).

A2 carries the N-acetylalanine modification. The segment at 2-56 (AAAAELRLLEKSLGLKPGNKYSAQGERQIPVLQTNNGPSLMGLSTIATHLVKQAS) is N-terminal. Residues 50 to 173 (HLVKQASKEH…FIKNRLYANS (124 aa)) form the GST C-terminal domain. The interval 57 to 63 (KEHLLGS) is linker. The tract at residues 64–152 (TAEEKAMVQQ…SRWFCHIQHY (89 aa)) is C-terminal. K138 bears the N6-acetyllysine mark. Residues 153–169 (PDIRQHLSSIVFIKNRL) are a coiled coil.

In terms of assembly, part of a multisubunit complex that groups tRNA ligases for Arg (RARS1), Asp (DARS1), Gln (QARS1), Ile (IARS1), Leu (LARS1), Lys (KARS1), Met (MARS1) the bifunctional ligase for Glu and Pro (EPRS1) and the auxiliary subunits AIMP1/p43, AIMP2/p38 and EEF1E1/p18. Can interact simultaneously with MARS1 and EPRS1. Forms a linear complex that contains MARS1, EEF1E1, EPRS1 and AIMP2 that is at the core of the multisubunit complex. Interacts with ATM and ATR. The interaction with ATM, which takes place independently of TP53, is induced by DNA damage that may occur during genotoxic stress or cell growth. The interaction with ATR is enhanced by UV irradiation.

Its subcellular location is the cytoplasm. It localises to the nucleus. Functionally, positive modulator of ATM response to DNA damage. The polypeptide is Eukaryotic translation elongation factor 1 epsilon-1 (Eef1e1) (Mus musculus (Mouse)).